The chain runs to 431 residues: Beclin-2 (431 aa).

The interval 17–74 (LSGSSESRSLPAAPAPTSGQAEPGDTREPGVTTREVTDAEEQQDGASSRSPPGDGSVS) is disordered. Residues 125 to 248 (LLEQLDIQLA…ARVQRDRLKE (124 aa)) adopt a coiled-coil conformation. Residues 173–243 (EARLVQELED…NQLQYARVQR (71 aa)) form a required for homodimer formation region.

It belongs to the beclin family. In terms of assembly, homodimer (via coiled-coil domain). Interacts (via coiled-coil domain) with ATG14 (via coiled-coil domain); this interaction is tighter than BECN2 self-association. Interacts with AMBRA1, UVRAG and PIK3C3/VPS34; these interactions are not disrupted by starvation. Does not interact with RUBCN. Interacts (via N-terminus) with GPRASP1/GASP1; the interaction is direct. Present in fetal and adult brain (at protein level).

The protein localises to the cytoplasm. Involved in 2 distinct lysosomal degradation pathways: acts as a regulator of autophagy and as a regulator of G-protein coupled receptors turnover. Regulates degradation in lysosomes of a variety of G-protein coupled receptors via its interaction with GPRASP1/GASP1. The sequence is that of Beclin-2 from Homo sapiens (Human).